Consider the following 896-residue polypeptide: Translation initiation factor IF-2 (896 aa).

Positions 1 to 260 (MDIENTNKPD…AQTNKKAHKA (260 aa)) are disordered. Residues 19–34 (KAADSKPESGKTDSKR) are compositionally biased toward basic and acidic residues. Residues 56 to 66 (EESSGGKASGK) are compositionally biased toward low complexity. Positions 85-136 (SVKEKKPDERLEETKKTAPRFEDKKSDAPSAQNEKRSFDSAKKEEKQTERKK) are enriched in basic and acidic residues. Residues 168-177 (RGQGNRPQRP) are compositionally biased toward low complexity. The region spanning 375–544 (PRPPVVTIMG…LLQAEVLELK (170 aa)) is the tr-type G domain. The tract at residues 384–391 (GHVDHGKT) is G1. Residue 384-391 (GHVDHGKT) participates in GTP binding. The segment at 409-413 (GITQH) is G2. The interval 430–433 (DTPG) is G3. GTP contacts are provided by residues 430–434 (DTPGH) and 484–487 (NKVD). The tract at residues 484–487 (NKVD) is G4. A G5 region spans residues 520–522 (SAL). The tract at residues 877 to 896 (SDSEKYKAPEIKEEGTETDE) is disordered.

It belongs to the TRAFAC class translation factor GTPase superfamily. Classic translation factor GTPase family. IF-2 subfamily.

It is found in the cytoplasm. Its function is as follows. One of the essential components for the initiation of protein synthesis. Protects formylmethionyl-tRNA from spontaneous hydrolysis and promotes its binding to the 30S ribosomal subunits. Also involved in the hydrolysis of GTP during the formation of the 70S ribosomal complex. The chain is Translation initiation factor IF-2 from Treponema denticola (strain ATCC 35405 / DSM 14222 / CIP 103919 / JCM 8153 / KCTC 15104).